The following is a 299-amino-acid chain: CCR4-NOT transcription complex subunit 9 (299 aa).

It belongs to the CNOT9 family. Homodimer. Component of the CCR4-NOT complex.

The protein localises to the nucleus. It is found in the cytoplasm. It localises to the P-body. Its function is as follows. Component of the CCR4-NOT complex which is one of the major cellular mRNA deadenylases and is linked to various cellular processes including bulk mRNA degradation, miRNA-mediated repression, translational repression during translational initiation and general transcription regulation. Additional complex functions may be a consequence of its influence on mRNA expression. Involved in down-regulation of MYB- and JUN-dependent transcription. Enhances ligand-dependent transcriptional activity of nuclear hormone receptors. May play a role in cell differentiation. In Xenopus tropicalis (Western clawed frog), this protein is CCR4-NOT transcription complex subunit 9.